Consider the following 246-residue polypeptide: uncharacterized protein (246 aa).

An N-terminal signal peptide occupies residues 1 to 30 (MKKKQVSHAIIISVMLSFVIAVFHTIHASE).

This is an uncharacterized protein from Bacillus subtilis (strain 168).